The primary structure comprises 37 residues: Large ribosomal subunit protein bL36 (37 aa).

It belongs to the bacterial ribosomal protein bL36 family.

The polypeptide is Large ribosomal subunit protein bL36 (Desulforamulus reducens (strain ATCC BAA-1160 / DSM 100696 / MI-1) (Desulfotomaculum reducens)).